The chain runs to 346 residues: Endosome-associated-trafficking regulator 1 (346 aa).

Residues 46 to 67 (FVSSNSKRAFSKDSNQSTTQFR) show a composition bias toward polar residues. 3 disordered regions span residues 46-77 (FVSSNSKRAFSKDSNQSTTQFRGPSECPDGNL), 93-129 (LQEDEDDDWSGSYHPSVIENTHGPKVPSPAGTDGDES), and 153-173 (SPPAGLHGKTQHRPDSTSDSE). Positions 170-317 (SDSEEGLRLL…SGAQSSIKQL (148 aa)) form a coiled coil.

This sequence belongs to the ENTR1 family.

It localises to the cytoplasm. The protein localises to the early endosome. It is found in the endosome. The protein resides in the recycling endosome. Its subcellular location is the midbody. It localises to the cytoskeleton. The protein localises to the microtubule organizing center. It is found in the centrosome. The protein resides in the cilium basal body. Its function is as follows. Endosome-associated protein that plays a role in membrane receptor sorting, cytokinesis and ciliogenesis. The protein is Endosome-associated-trafficking regulator 1 of Xenopus tropicalis (Western clawed frog).